Consider the following 335-residue polypeptide: 3-ketodihydrosphingosine reductase TSC10 (335 aa).

9 residues coordinate NADPH: Gly42, Ser44, Ser45, Gly46, Arg67, Asp68, Lys71, Asp95, and Leu96. Residues 42–46 (GGSSG) carry the GXSXG motif. The interval 141 to 207 (LKDGLDGVYW…RGLSDALRSE (67 aa)) is involved in homodimer formation. Tyr190 serves as the catalytic Proton acceptor. Residues Tyr190, Lys194, and Ile223 each contribute to the NADP(+) site. Lys194 acts as the Lowers pKa of active site Tyr in catalysis. A helical transmembrane segment spans residues 288–308 (TNNFLLDTLWLIVSSVGVPIW).

Belongs to the short-chain dehydrogenases/reductases (SDR) family. As to quaternary structure, homodimer; a minor portion forms homotetramers.

It localises to the endoplasmic reticulum membrane. The catalysed reaction is sphinganine + NADP(+) = 3-oxosphinganine + NADPH + H(+). It participates in lipid metabolism; sphingolipid metabolism. Its function is as follows. Catalyzes the reduction of 3'-oxosphinganine (3-ketodihydrosphingosine/KDS) to sphinganine (dihydrosphingosine/DHS), the second step of de novo sphingolipid biosynthesis. The sequence is that of 3-ketodihydrosphingosine reductase TSC10 (TSC10) from Cryptococcus neoformans var. neoformans serotype D (strain JEC21 / ATCC MYA-565) (Filobasidiella neoformans).